We begin with the raw amino-acid sequence, 493 residues long: MVEIKKICCIGAGYVGGPTCSVIAHMCPEIRVTVVDVNEARINAWNSPTLPIYEPGLKEVVESCRGKNLFFSTNIDDAIREADLVFISVNTPTKTYGMGKGRAADLKYIEACARRIVQNSNGYKIVTEKSTVPVRAAESIRRIFDANTKPNLNLQVLSNPEFLAEGTAIKDLKNPDRVLIGGDETPEGQKAVRALCAVYEHWVPKEKILTTNTWSSELSKLAANAFLAQRISSINSISALCEATGADVEEVATAIGMDQRIGNKFLKASVGFGGSCFQKDVLNLVYLCEALNLPEVARYWQQVIDMNDYQRRRFASRIIDSLFNTVTDKKIAILGFAFKKDTGDTRESSSIYISKYLMDEGAHLHIYDPKVPREQIVVDLSHPGVSADDQVSRLVTISKDPYEACDGAHALVICTEWDMFKELDYERIHKKMLKPAFIFDGRRVLDGLHSELQTIGFQIETIGKKVSSKRIPYTPGEIPKFSLQDPPNKKPKV.

NAD(+) contacts are provided by residues G11 to G16, D36, R41, and V89 to T93. Residues S88–E110 form a disordered region. K107 is modified (N6-acetyllysine). The allosteric switch region stretch occupies residues K129–R135. Residue S130–V132 participates in NAD(+) binding. The Proton donor/acceptor role is filled by E161. Substrate contacts are provided by residues E161–E165, K220–N224, R260, and K267–G273. NAD(+) is bound at residue E165. K220 serves as the catalytic Proton donor/acceptor. C276 acts as the Nucleophile in catalysis. C276 to K279 contributes to the NAD(+) binding site. The important for formation of active hexamer structure stretch occupies residues S321 to T325. A substrate-binding site is contributed by F338–K339. Position 346 (R346) interacts with NAD(+). R442 provides a ligand contact to substrate. The segment at V466 to V493 is disordered. The residue at position 474 (T474) is a Phosphothreonine.

It belongs to the UDP-glucose/GDP-mannose dehydrogenase family. In terms of assembly, homohexamer.

It catalyses the reaction UDP-alpha-D-glucose + 2 NAD(+) + H2O = UDP-alpha-D-glucuronate + 2 NADH + 3 H(+). Its pathway is nucleotide-sugar biosynthesis; UDP-alpha-D-glucuronate biosynthesis; UDP-alpha-D-glucuronate from UDP-alpha-D-glucose: step 1/1. Its activity is regulated as follows. UDP-alpha-D-xylose (UDX) acts as a feedback inhibitor. It binds at the same site as the substrate, but functions as allosteric inhibitor by triggering a conformation change that disrupts the active hexameric ring structure and gives rise to an inactive, horseshoe-shaped hexamer. Its function is as follows. Catalyzes the formation of UDP-alpha-D-glucuronate, a constituent of complex glycosaminoglycans. Required for the biosynthesis of chondroitin sulfate and heparan sulfate. Required for embryonic development via its role in the biosynthesis of glycosaminoglycans. Required for proper brain and neuronal development. This Mus musculus (Mouse) protein is UDP-glucose 6-dehydrogenase (Ugdh).